Consider the following 208-residue polypeptide: N-hydroxyputrescine acetyltransferase (208 aa).

The protein belongs to the IucB family.

The catalysed reaction is N-hydroxyputrescine + acetyl-CoA = N(1)-acetyl-N(1)-hydroxyputrescine + CoA. Its pathway is siderophore biosynthesis. In terms of biological role, N-acetyltransferase involved in the biosynthesis of fimsbactin A, the major siderophore produced by A.baumannii. Catalyzes the acetylation of N-hydroxyputrescine to form N(1)-acetyl-N(1)-hydroxyputrescine (ahPutr). This Acinetobacter baumannii (strain ATCC 17978 / DSM 105126 / CIP 53.77 / LMG 1025 / NCDC KC755 / 5377) protein is N-hydroxyputrescine acetyltransferase.